Consider the following 150-residue polypeptide: AN1-type zinc finger protein TMC1 (150 aa).

Residues 1–82 (MSDINEIEIP…TKKTTKKKKK (82 aa)) form a disordered region. Position 2 is an N-acetylserine (Ser2). Basic and acidic residues predominate over residues 23 to 33 (DPMHEIEDKST). A phosphoserine mark is found at Ser43 and Ser54. Residues 53–70 (NSRSSSNSSVTSTGQSSR) show a composition bias toward low complexity. The span at 71–82 (RVTKKTTKKKKK) shows a compositional bias: basic residues. An AN1-type zinc finger spans residues 79 to 128 (KKKKNACYFDTCSSAASKFIGDCNFCKGHFCSKHRLMENHACNGLTSCKE). Residues Cys85, Cys90, Cys101, Cys104, Cys109, His112, His118, and Cys120 each contribute to the Zn(2+) site.

It is found in the nucleus. May have a role in protecting cells from metalloid-induced proteotoxicity. The sequence is that of AN1-type zinc finger protein TMC1 from Saccharomyces cerevisiae (strain ATCC 204508 / S288c) (Baker's yeast).